The chain runs to 101 residues: Protein PrgJ (101 aa).

To S.flexneri MxiI.

Required for invasion of epithelial cells. In Salmonella typhimurium (strain LT2 / SGSC1412 / ATCC 700720), this protein is Protein PrgJ (prgJ).